The chain runs to 333 residues: DNA-directed RNA polymerase subunit alpha (333 aa).

The tract at residues 1–234 is alpha N-terminal domain (alpha-NTD); that stretch reads MQISVNEFLT…QQLAAFVDLK (234 aa). The interval 248–333 is alpha C-terminal domain (alpha-CTD); it reads IDPILLRPVD…SLKKDDKATA (86 aa).

The protein belongs to the RNA polymerase alpha chain family. Homodimer. The RNAP catalytic core consists of 2 alpha, 1 beta, 1 beta' and 1 omega subunit. When a sigma factor is associated with the core the holoenzyme is formed, which can initiate transcription.

It catalyses the reaction RNA(n) + a ribonucleoside 5'-triphosphate = RNA(n+1) + diphosphate. DNA-dependent RNA polymerase catalyzes the transcription of DNA into RNA using the four ribonucleoside triphosphates as substrates. This Pseudomonas entomophila (strain L48) protein is DNA-directed RNA polymerase subunit alpha.